Reading from the N-terminus, the 452-residue chain is MRECISIHVGQAGVQMGNACWELYCLEHGIQPDGQMPSDKTIGGGDDSFNTFFSETGAGKHVPRAVFVDLEPTVVDEVRTGTYRQLFHPEQLITGKEDAANNYARGHYTVGKELIDIVLDRIRKLADQCTGLQGFLIFHSFGGGTGSGFSSLLMERLSVDYGKKSKLEFAVYPAPQISTAVVEPYNSILTTHTTLEHSDCAFMVDNEAIYDICRRNLDIERPTYTNLNRLIGQIVSSITASLRFDGALNVDLTEFQTNLVPYPRIHFPLATYAPVISAEKAYHEQLTVSEITNACFEPANQMVKCDPRHGKYMACCLLYRGDVVPKDVNAAIATIKTKRTIQFVDWCPTGFKVGINYQPPTVVPGGDLAKVQRAVCMLSNTTAIAEAWARLDHKFDLMYAKRAFVHWYVGEGMEEGEFSEAREDLAALEKDYEEVGVDSADAEGEEEEGDEY.

Q11 lines the GTP pocket. K40 carries the post-translational modification N6-acetyllysine. GTP-binding residues include E71, S140, G144, T145, T179, N206, and N228. Residue E71 participates in Mg(2+) binding. E254 is an active-site residue. The tract at residues E433–Y452 is disordered.

It belongs to the tubulin family. As to quaternary structure, dimer of alpha and beta chains. A typical microtubule is a hollow water-filled tube with an outer diameter of 25 nm and an inner diameter of 15 nM. Alpha-beta heterodimers associate head-to-tail to form protofilaments running lengthwise along the microtubule wall with the beta-tubulin subunit facing the microtubule plus end conferring a structural polarity. Microtubules usually have 13 protofilaments but different protofilament numbers can be found in some organisms and specialized cells. Mg(2+) serves as cofactor. In terms of processing, undergoes a tyrosination/detyrosination cycle, the cyclic removal and re-addition of a C-terminal tyrosine residue by the enzymes tubulin tyrosine carboxypeptidase (TTCP) and tubulin tyrosine ligase (TTL), respectively. Post-translationally, acetylation of alpha chains at Lys-40 stabilizes microtubules and affects affinity and processivity of microtubule motors. This modification has a role in multiple cellular functions, ranging from cell motility, cell cycle progression or cell differentiation to intracellular trafficking and signaling.

It is found in the cytoplasm. The protein localises to the cytoskeleton. The catalysed reaction is GTP + H2O = GDP + phosphate + H(+). Tubulin is the major constituent of microtubules, a cylinder consisting of laterally associated linear protofilaments composed of alpha- and beta-tubulin heterodimers. Microtubules grow by the addition of GTP-tubulin dimers to the microtubule end, where a stabilizing cap forms. Below the cap, tubulin dimers are in GDP-bound state, owing to GTPase activity of alpha-tubulin. The sequence is that of Tubulin alpha-1 chain from Paracentrotus lividus (Common sea urchin).